Reading from the N-terminus, the 144-residue chain is Apidaecins type 22 (144 aa).

Residues 1–19 (MKNFALAILVVTFVVAVFG) form the signal peptide. 4 consecutive propeptides follow at residues 20 to 42 (NTNL…EAEP), 63 to 70 (EAEPEAEP), 91 to 98 (EAEPEAEP), and 119 to 126 (EAEPEAEP). The segment at 20–144 (NTNLDPPTRP…PQPRPPHPRI (125 aa)) is disordered. A compositionally biased stretch (pro residues) spans 134 to 144 (IPQPRPPHPRI).

The protein belongs to the apidaecin family.

The protein resides in the secreted. Apidaecins have bactericidal activity; predominantly against Gram-negative bacteria. They seem to interfere with cell propagation. The sequence is that of Apidaecins type 22 from Apis mellifera (Honeybee).